Reading from the N-terminus, the 174-residue chain is Large ribosomal subunit protein uL10 (174 aa).

The protein belongs to the universal ribosomal protein uL10 family. In terms of assembly, part of the ribosomal stalk of the 50S ribosomal subunit. The N-terminus interacts with L11 and the large rRNA to form the base of the stalk. The C-terminus forms an elongated spine to which L12 dimers bind in a sequential fashion forming a multimeric L10(L12)X complex.

In terms of biological role, forms part of the ribosomal stalk, playing a central role in the interaction of the ribosome with GTP-bound translation factors. The protein is Large ribosomal subunit protein uL10 of Geotalea uraniireducens (strain Rf4) (Geobacter uraniireducens).